Reading from the N-terminus, the 300-residue chain is SNAP25 homologous protein SNAP33 (300 aa).

Disordered stretches follow at residues 1-76 (MFGL…QSLF) and 176-228 (WKPK…PESA). Position 29 is a phosphoserine (S29). The span at 38–49 (TLNPSKRTTSEP) shows a compositional bias: polar residues. The segment covering 190 to 208 (TRDDSPTRRVNHLEKREKL) has biased composition (basic and acidic residues). The t-SNARE coiled-coil homology domain maps to 235-297 (EMEKAKQDDG…QQSNQRGRRL (63 aa)).

The protein belongs to the SNAP-25 family. In terms of assembly, interacts with the cytokinesis-specific syntaxin KNOLLE and with SYP121. Binds to EXO70B2. As to expression, ubiquitous, with a strong expression in root tips, ovules, very young leaves, vascular tissue, hydathodes, stipules and the abscission and dehiscence zones of the siliques.

The protein localises to the membrane. Its function is as follows. t-SNARE involved in diverse vesicle trafficking and membrane fusion processes, including cell plate formation. May function in the secretory pathway. The chain is SNAP25 homologous protein SNAP33 from Arabidopsis thaliana (Mouse-ear cress).